We begin with the raw amino-acid sequence, 1362 residues long: Integrator complex subunit 2 homolog (1362 aa).

The segment covering 1–10 has biased composition (low complexity); sequence MITSNNNNKN. 3 disordered regions span residues 1 to 20, 629 to 660, and 928 to 963; these read MITS…EMKS, TTGT…SSPN, and NNNK…EEEE. The segment covering 945 to 955 has biased composition (basic and acidic residues); that stretch reads DDVKMKDKEKE.

It belongs to the Integrator subunit 2 family. As to quaternary structure, component of the Integrator complex. The core complex associates with protein phosphatase 2A subunits, to form the Integrator-PP2A (INTAC) complex.

It localises to the nucleus. It is found in the cytoplasm. Functionally, component of the integrator complex, a multiprotein complex that terminates RNA polymerase II (Pol II) transcription in the promoter-proximal region of genes. The integrator complex provides a quality checkpoint during transcription elongation by driving premature transcription termination of transcripts that are unfavorably configured for transcriptional elongation: the complex terminates transcription by (1) catalyzing dephosphorylation of the C-terminal domain (CTD) of Pol II subunit polr2a, (2) degrading the exiting nascent RNA transcript via endonuclease activity and (3) promoting the release of Pol II from bound DNA. The integrator complex is also involved in terminating the synthesis of non-coding Pol II transcripts, such as enhancer RNAs (eRNAs), small nuclear RNAs (snRNAs), telomerase RNAs and long non-coding RNAs (lncRNAs). In Dictyostelium discoideum (Social amoeba), this protein is Integrator complex subunit 2 homolog (ints2).